A 157-amino-acid polypeptide reads, in one-letter code: Protein Smg (157 aa).

It belongs to the Smg family.

This Escherichia coli O6:H1 (strain CFT073 / ATCC 700928 / UPEC) protein is Protein Smg.